The sequence spans 108 residues: MNPREIRRMMAQMGIKSTEMSDVKQVIFKGKDKDYIIDNASVTMIEAQGQKTFQVLGNLREVKKEVEQYSEDDIKLVMEQAKVTREKAIEALKAANGEPAQAILNLTS.

Residues 1 to 68 (MNPREIRRMM…LREVKKEVEQ (68 aa)) enclose the NAC-A/B domain.

This sequence belongs to the NAC-alpha family. As to quaternary structure, homodimer. Interacts with the ribosome. Binds ribosomal RNA.

Functionally, contacts the emerging nascent chain on the ribosome. The chain is Nascent polypeptide-associated complex protein from Picrophilus torridus (strain ATCC 700027 / DSM 9790 / JCM 10055 / NBRC 100828 / KAW 2/3).